The chain runs to 576 residues: Sulfite reductase [NADPH] hemoprotein beta-component (576 aa).

[4Fe-4S] cluster-binding residues include cysteine 435, cysteine 441, cysteine 480, and cysteine 484. Cysteine 484 contributes to the siroheme binding site.

The protein belongs to the nitrite and sulfite reductase 4Fe-4S domain family. Alpha(8)-beta(8). The alpha component is a flavoprotein, the beta component is a hemoprotein. Requires siroheme as cofactor. It depends on [4Fe-4S] cluster as a cofactor.

It catalyses the reaction hydrogen sulfide + 3 NADP(+) + 3 H2O = sulfite + 3 NADPH + 4 H(+). The protein operates within sulfur metabolism; hydrogen sulfide biosynthesis; hydrogen sulfide from sulfite (NADPH route): step 1/1. Component of the sulfite reductase complex that catalyzes the 6-electron reduction of sulfite to sulfide. This is one of several activities required for the biosynthesis of L-cysteine from sulfate. The sequence is that of Sulfite reductase [NADPH] hemoprotein beta-component from Proteus mirabilis (strain HI4320).